A 404-amino-acid chain; its full sequence is Serine/threonine transporter SstT (404 aa).

The next 9 membrane-spanning stretches (helical) occupy residues 11 to 31 (IINA…IILA), 44 to 64 (LGGL…FVLV), 82 to 102 (IISL…TMSF), 144 to 164 (TANY…LHHA), 179 to 199 (VSFI…GLVA), 218 to 238 (GVLL…MVFI), 290 to 310 (IPLG…VLTL), 316 to 336 (MGIQ…AISA), and 363 to 383 (VAMQ…SAET).

The protein belongs to the dicarboxylate/amino acid:cation symporter (DAACS) (TC 2.A.23) family.

The protein resides in the cell inner membrane. The enzyme catalyses L-serine(in) + Na(+)(in) = L-serine(out) + Na(+)(out). It carries out the reaction L-threonine(in) + Na(+)(in) = L-threonine(out) + Na(+)(out). Functionally, involved in the import of serine and threonine into the cell, with the concomitant import of sodium (symport system). This Desulfotalea psychrophila (strain LSv54 / DSM 12343) protein is Serine/threonine transporter SstT.